The sequence spans 155 residues: Putative pre-16S rRNA nuclease (155 aa).

This sequence belongs to the YqgF nuclease family.

It is found in the cytoplasm. Could be a nuclease involved in processing of the 5'-end of pre-16S rRNA. This is Putative pre-16S rRNA nuclease from Xylella fastidiosa (strain M12).